We begin with the raw amino-acid sequence, 329 residues long: Serpentine receptor class alpha-6 (329 aa).

7 helical membrane passes run 26–46 (VDLLAIILAFFASYFAIKIVI), 68–88 (LYQISYGIEAIGMLYRGFFML), 104–124 (YFKVLMIGTSGMIFGQTGLLI), 143–163 (IGVCISLIVLVCSTSSGFIIL), 187–207 (NLFSILSTVLTLFNLIVSIFI), 238–258 (ICFLALSQFLWMFMYSFGILI), and 273–293 (FWIAWCYTMPFIALMFPVLLI).

The protein belongs to the nematode receptor-like protein sra family.

It is found in the membrane. This is Serpentine receptor class alpha-6 (sra-6) from Caenorhabditis elegans.